Here is a 356-residue protein sequence, read N- to C-terminus: MKREILLERIDKLKQIMPWYVLEYYQSKLAVPYSFTTLYEYLKEYDRFFSWVLESGISNADKMSDIPLSVLENMSKKDMESFILYLRERPLLNANTTKQGVSQTTINRTLSALSSLYKYLTEEVENDQGEPYFYRNVMKKVSTKKKKETLAARAENIKQKLFLGDETEGFLTYIDQEYPQQLSNRALSSFNKNKERDLAIIALLLASGVRLSEAVNLDLRDLNLKMMVIDVTRKGGKRDSVNVAAFAKPYLENYLAIRNQRYKTEKIDTALFLTLYRGVPNRIDASSVEKMVAKYSEDFKVRVTPHKLRHTLATRLYDATKSQVLVSHQLGHASTQVTDLYTHIVNDEQKNALDSL.

The Core-binding (CB) domain maps to 16-121 (IMPWYVLEYY…ALSSLYKYLT (106 aa)). Positions 169-354 (GFLTYIDQEY…VNDEQKNALD (186 aa)) constitute a Tyr recombinase domain. Active-site residues include arginine 210, lysine 234, histidine 306, arginine 309, and histidine 332. Tyrosine 341 (O-(3'-phospho-DNA)-tyrosine intermediate) is an active-site residue.

The protein belongs to the 'phage' integrase family. XerS subfamily.

It localises to the cytoplasm. Its activity is regulated as follows. FtsK is required for recombination. In terms of biological role, site-specific tyrosine recombinase, which acts by catalyzing the cutting and rejoining of the recombining DNA molecules. Essential to convert dimers of the bacterial chromosome into monomers to permit their segregation at cell division. This Streptococcus pneumoniae (strain Hungary19A-6) protein is Tyrosine recombinase XerS.